A 284-amino-acid chain; its full sequence is MQEKIRETCLATKTVKLLSARRLIVKIGSAVVADAETGEIRGPWLETLIKDVVRFFARGQQVIIVTSGAVAAGSRHFKQLDRSLRIEEKQAAAAIGQIRLMIAYEQSLKRHGFGLGQVLLTSADVDNQRCRLNARSAFQQLLNVGAVPVINENDATATPEVCLGDNDRLAARVAQIAKADLLILLSDVDGLFTEDPHDNPLARMIPEVRRITPEIEIMASLSPARHGSGGMVTKLMAARIAMEAGCNVVIAKGSKSYPLAAIENGAPSTWFIPPARETATRGGR.

K26 contacts ATP. 3 residues coordinate substrate: S67, D154, and N166. ATP contacts are provided by residues 186 to 187 and 228 to 234; these read SD and SGGMVTK.

The protein belongs to the glutamate 5-kinase family.

It is found in the cytoplasm. The catalysed reaction is L-glutamate + ATP = L-glutamyl 5-phosphate + ADP. Its pathway is amino-acid biosynthesis; L-proline biosynthesis; L-glutamate 5-semialdehyde from L-glutamate: step 1/2. Catalyzes the transfer of a phosphate group to glutamate to form L-glutamate 5-phosphate. The protein is Glutamate 5-kinase 2 of Mesorhizobium japonicum (strain LMG 29417 / CECT 9101 / MAFF 303099) (Mesorhizobium loti (strain MAFF 303099)).